Reading from the N-terminus, the 71-residue chain is MKTGIHPDYQDMKATCSCGNVIVVRSTLKKDLNLDVCSACHPFYTGKQRNVDTGGRVDKFNKRFSALSTKK.

4 residues coordinate Zn(2+): cysteine 16, cysteine 18, cysteine 37, and cysteine 40.

This sequence belongs to the bacterial ribosomal protein bL31 family. Type A subfamily. In terms of assembly, part of the 50S ribosomal subunit. Zn(2+) is required as a cofactor.

Binds the 23S rRNA. This Pseudoalteromonas atlantica (strain T6c / ATCC BAA-1087) protein is Large ribosomal subunit protein bL31.